Here is a 610-residue protein sequence, read N- to C-terminus: UvrABC system protein C (610 aa).

The 79-residue stretch at 16 to 94 (SAPGVYRMYD…IKQYMPKYNV (79 aa)) folds into the GIY-YIG domain. In terms of domain architecture, UVR spans 203-238 (KQVISQLVAKMETAAIDMEYERAAQYRDQITALRRV).

It belongs to the UvrC family. Interacts with UvrB in an incision complex.

It is found in the cytoplasm. Functionally, the UvrABC repair system catalyzes the recognition and processing of DNA lesions. UvrC both incises the 5' and 3' sides of the lesion. The N-terminal half is responsible for the 3' incision and the C-terminal half is responsible for the 5' incision. The polypeptide is UvrABC system protein C (Shewanella frigidimarina (strain NCIMB 400)).